The following is a 36-amino-acid chain: Pancreatic polypeptide (36 aa).

The residue at position 36 (phenylalanine 36) is a Phenylalanine amide.

The protein belongs to the NPY family.

It localises to the secreted. In terms of biological role, hormone secreted by pancreatic cells that acts as a regulator of pancreatic and gastrointestinal functions. The sequence is that of Pancreatic polypeptide (ppy) from Rana temporaria (European common frog).